Consider the following 619-residue polypeptide: DNA mismatch repair protein MutL (619 aa).

The tract at residues 358-401 is disordered; that stretch reads GGNQFARPSEAREAATRFSITSSREPAASGGSSGGASWPHAQPG.

Belongs to the DNA mismatch repair MutL/HexB family.

This protein is involved in the repair of mismatches in DNA. It is required for dam-dependent methyl-directed DNA mismatch repair. May act as a 'molecular matchmaker', a protein that promotes the formation of a stable complex between two or more DNA-binding proteins in an ATP-dependent manner without itself being part of a final effector complex. The sequence is that of DNA mismatch repair protein MutL from Klebsiella pneumoniae (strain 342).